An 861-amino-acid chain; its full sequence is DNA mismatch repair protein MutS (861 aa).

Residue 614–621 (GPNMGGKS) participates in ATP binding.

Belongs to the DNA mismatch repair MutS family.

In terms of biological role, this protein is involved in the repair of mismatches in DNA. It is possible that it carries out the mismatch recognition step. This protein has a weak ATPase activity. This Mannheimia succiniciproducens (strain KCTC 0769BP / MBEL55E) protein is DNA mismatch repair protein MutS.